Consider the following 162-residue polypeptide: UPF0305 protein MMP0665 (162 aa).

This sequence belongs to the UPF0305 family.

The sequence is that of UPF0305 protein MMP0665 from Methanococcus maripaludis (strain DSM 14266 / JCM 13030 / NBRC 101832 / S2 / LL).